Consider the following 558-residue polypeptide: Dihydroxy-acid dehydratase (558 aa).

Asp81 is a binding site for Mg(2+). A [2Fe-2S] cluster-binding site is contributed by Cys122. 2 residues coordinate Mg(2+): Asp123 and Lys124. Lys124 is subject to N6-carboxylysine. Residue Cys195 participates in [2Fe-2S] cluster binding. Glu447 provides a ligand contact to Mg(2+). The Proton acceptor role is filled by Ser473.

The protein belongs to the IlvD/Edd family. Homodimer. It depends on [2Fe-2S] cluster as a cofactor. The cofactor is Mg(2+).

The enzyme catalyses (2R)-2,3-dihydroxy-3-methylbutanoate = 3-methyl-2-oxobutanoate + H2O. It carries out the reaction (2R,3R)-2,3-dihydroxy-3-methylpentanoate = (S)-3-methyl-2-oxopentanoate + H2O. It functions in the pathway amino-acid biosynthesis; L-isoleucine biosynthesis; L-isoleucine from 2-oxobutanoate: step 3/4. It participates in amino-acid biosynthesis; L-valine biosynthesis; L-valine from pyruvate: step 3/4. Its function is as follows. Functions in the biosynthesis of branched-chain amino acids. Catalyzes the dehydration of (2R,3R)-2,3-dihydroxy-3-methylpentanoate (2,3-dihydroxy-3-methylvalerate) into 2-oxo-3-methylpentanoate (2-oxo-3-methylvalerate) and of (2R)-2,3-dihydroxy-3-methylbutanoate (2,3-dihydroxyisovalerate) into 2-oxo-3-methylbutanoate (2-oxoisovalerate), the penultimate precursor to L-isoleucine and L-valine, respectively. This chain is Dihydroxy-acid dehydratase, found in Bacillus velezensis (strain DSM 23117 / BGSC 10A6 / LMG 26770 / FZB42) (Bacillus amyloliquefaciens subsp. plantarum).